The following is a 349-amino-acid chain: MAEAIFKALLLVIATTAFATTEAALGQRVPCYFVFGDSVFDNGNNNVLNTSAKVNYSPYGIDFARGPTGRFSNGRNIPDIIAELMRFSDYIPPFTGASPEQAHIGINYASGGGGIREETSQHLGEIISFKKQIKNHRSMIMTAKVPEEKLNKCLYTINIGSNDYLNNYFMPAPYMTNKKFSFDEYADSLIRSYRSYLKSLYVLGARKVAVFGVSKLGCTPRMIASHGGGNGCAAEVNKAVEPFNKNLKALVYEFNRDFADAKFTFVDIFSGQSPFAFFMLGFRVTDKSCCTVKPGEELCATNEPVCPVQRRYVYWDNVHSTEAANMVVAKAAYAGLITSPYSLSWLARL.

The N-terminal stretch at methionine 1 to alanine 23 is a signal peptide. Residue serine 38 is the Nucleophile of the active site. Asparagine 49 is a glycosylation site (N-linked (GlcNAc...) asparagine). Catalysis depends on residues aspartate 316 and histidine 319.

The protein belongs to the 'GDSL' lipolytic enzyme family.

The protein resides in the secreted. This chain is GDSL esterase/lipase At2g19050, found in Arabidopsis thaliana (Mouse-ear cress).